Reading from the N-terminus, the 1355-residue chain is Transcription factor MAR1 (1355 aa).

Positions 23–52 form a DNA-binding region, zn(2)-C6 fungal-type; the sequence is CTICRKRKVKCDKTRPHCNQCTKTGVAHLC. 3 disordered regions span residues 586 to 614, 918 to 942, and 1221 to 1253; these read TTDN…KDTN, SVPS…LNQD, and PPIS…TSSL. Residues 589-603 show a composition bias toward low complexity; it reads NTRSGPPSNSNRNGS. The span at 604 to 614 shows a compositional bias: polar residues; the sequence is ETPSVSPKDTN. The span at 918–927 shows a compositional bias: low complexity; sequence SVPSSCNSSS. The segment covering 1225–1238 has biased composition (polar residues); that stretch reads SAKNNMAWGTTPES.

The protein resides in the nucleus. Functionally, transcription factor that contributes to plasma membrane sphingolipid incorporation and membrane permeability, decreasing fluconazole accumulation. Regulates 337 genes under fluconazole stress, including several related to lipid biosynthesis pathways such as RSB1, encoding a sphingoid long-chain base efflux transporter. Associates with the promoter of RSB1 in the region containing two 5'-CCCCTCC-3' motifs and increases its promoter occupancy upon fluconazole stress. The protein is Transcription factor MAR1 of Candida glabrata (strain ATCC 2001 / BCRC 20586 / JCM 3761 / NBRC 0622 / NRRL Y-65 / CBS 138) (Yeast).